Consider the following 139-residue polypeptide: MSVNYATLGDLKKGSYIVIDGEPCRIVEMSRAKTGKHGSAKAHVVAICVFSGQKKSLVAPVDTRVQIPVIEKRLGQVLADMGDMVQIMDLETYDTFEVEKPGGNEEEEQLAAKLQPGVTVEYWLIMGKPKIIRIRSSSS.

Hypusine is present on lysine 36.

Belongs to the eIF-5A family.

It is found in the cytoplasm. Functions by promoting the formation of the first peptide bond. In Aeropyrum pernix (strain ATCC 700893 / DSM 11879 / JCM 9820 / NBRC 100138 / K1), this protein is Translation initiation factor 5A (eif5a).